Reading from the N-terminus, the 261-residue chain is MEKGKVVVLEDRVPKLKERRRQKANRRLIAYLSFFFLFILCVLYFQSPLGAVGHVEVSGNRHLTAERIISLSGITKRTSFWKVNEQNVEKKLTRHPEIKEATVEKQLPNTIAIHVREWRRIAYVYDRQTFFPLLENGRLLKQEGTKTAPSDAPVLVGWKDGDAIAEMTGQLAELPAAVLGAMSEIHYKPTREYEDRVIVYMNDGYEVSATIRQFADKLSHYPAIAAALDRNVKGVIHLEVGSYFVPYSPPKKEDGDETTSP.

Over 1–27 the chain is Cytoplasmic; the sequence is MEKGKVVVLEDRVPKLKERRRQKANRR. The chain crosses the membrane as a helical span at residues 28-48; sequence LIAYLSFFFLFILCVLYFQSP. The alpha stretch occupies residues 47 to 117; it reads SPLGAVGHVE…PNTIAIHVRE (71 aa). Topologically, residues 49–261 are extracellular; that stretch reads LGAVGHVEVS…KEDGDETTSP (213 aa). Positions 50 to 118 constitute a POTRA domain; it reads GAVGHVEVSG…NTIAIHVREW (69 aa). The interval 118-230 is beta; sequence WRRIAYVYDR…YPAIAAALDR (113 aa). Residues 231 to 260 are gamma; that stretch reads NVKGVIHLEVGSYFVPYSPPKKEDGDETTS.

The protein belongs to the FtsQ/DivIB family. DivIB subfamily.

It is found in the cell membrane. Its function is as follows. Cell division protein that may be involved in stabilizing or promoting the assembly of the division complex. The protein is Cell division protein DivIB of Geobacillus kaustophilus (strain HTA426).